Reading from the N-terminus, the 395-residue chain is S-adenosylmethionine synthase (395 aa).

Position 18 (histidine 18) interacts with ATP. Aspartate 20 is a binding site for Mg(2+). Glutamate 46 contributes to the K(+) binding site. Residues glutamate 59 and glutamine 103 each contribute to the L-methionine site. Residues 103-113 (QSADIAVGVDS) form a flexible loop region. ATP contacts are provided by residues 170–172 (DAK), 235–236 (KF), aspartate 244, 250–251 (RK), alanine 267, and lysine 271. Residue aspartate 244 coordinates L-methionine. Lysine 275 serves as a coordination point for L-methionine.

The protein belongs to the AdoMet synthase family. As to quaternary structure, homotetramer; dimer of dimers. Mg(2+) is required as a cofactor. K(+) serves as cofactor.

It is found in the cytoplasm. It carries out the reaction L-methionine + ATP + H2O = S-adenosyl-L-methionine + phosphate + diphosphate. It functions in the pathway amino-acid biosynthesis; S-adenosyl-L-methionine biosynthesis; S-adenosyl-L-methionine from L-methionine: step 1/1. Functionally, catalyzes the formation of S-adenosylmethionine (AdoMet) from methionine and ATP. The overall synthetic reaction is composed of two sequential steps, AdoMet formation and the subsequent tripolyphosphate hydrolysis which occurs prior to release of AdoMet from the enzyme. The protein is S-adenosylmethionine synthase of Granulibacter bethesdensis (strain ATCC BAA-1260 / CGDNIH1).